A 967-amino-acid polypeptide reads, in one-letter code: MKSEVSSDAPKRQENLKGVLLNPEAIGASKSFPGEVEMITSKVSNEFSHLCSDTNKQQIDLNSDGTEQEKNLVVHKKRKSQQAGTSYAQSCEVKENQRLLRLQPQSDEDNDSSFSDCISSPSSSSHFGDSDTMTSDEDKDNPRRYSPAGINSTPRTQSARAQKWPRPHTDSVSSLVMKRPCYQVSSLRRPLHRKRFVKNVSSQRTQKQKERIMLQRKKREVLARQKYALLPSSSSSSENDLSSESSSSSSTEGEEDLFVSPGENHQDGTTLPSGGMDEDVVVIEASSTPQVTANEEINVTSTDSEVEIVTVGETYRSRATLGHPRSHWGQNSQSGRTQEHRTRNRVSTIIQPLRQNTTEVVDLTVDEDDPTVVPTTSGRVESQPVSTVSSNTSTSEPASDSVSGLLGSRGCAVSETPAIPPNSNTVGTIADDSRTSTSGTNADGGPPAMPRLPSCCPQHSPCGGSSQNHVLGHPHSSCFQPHSHHFPHHHHHHHHHSSHPGVPLSPSFRDSHCPVERNAAVPPPCGATSGSGSTYHDPQALPVDLSNNGIRNHGSVSFHSTSAFDPCCPGSSSRSTVYGHQSTTSNAQTMAIDGYGSSMVAQAQPQTPSPLSSCRHYMHASYTSLTRPLHHQTSACPHSNPASQPPPPPPPPPMDYVIAHQVPFISPLPSLTSTHAVPPPPPSHHLSTAAAPLPQHLSTSHQSMSHHISATAPATQRLHAHEVIQRMEVQRRRMMQHPTRAHERPPPHPHRMHPNYGHGHHIHVPQTMSSHPRQGPERSAWEIAIETGVTAAPYQTGPLHTHLAHYHPPPRLHHLQIGALPLMVPDMAGYPHIRYISSGLDGRSFRVPFRGNFEELIHLEERLGNVNRGASQGTIERCTYPHKYKKVSTDWFSQRKLHSKQDGEEAPEEDTEEKCTICLSILEEGEDVRRLPCMHLFHQVCVDQWLITNKKCPICRVDIDTQLPTES.

2 disordered regions span residues 57-175 (QQID…VSSL) and 193-276 (RKRF…SGGM). The span at 112-131 (SSFSDCISSPSSSSHFGDSD) shows a compositional bias: low complexity. Positions 149–160 (GINSTPRTQSAR) are enriched in polar residues. Residues 232 to 251 (SSSSSSENDLSSESSSSSST) show a composition bias toward low complexity. The short motif at 280-284 (VVVIE) is the SUMO interaction motif 1 (SIM) element. An SUMO interaction motif 2 (SIM) motif is present at residues 305-311 (EVEIVTV). Residues 321–343 (LGHPRSHWGQNSQSGRTQEHRTR) form a disordered region. The SUMO interaction motif 3 (SIM) motif lies at 360–364 (VVDLT). Disordered regions lie at residues 368–452 (DDPT…MPRL), 482–548 (HSHH…LSNN), 629–657 (LHHQ…MDYV), and 669–689 (PSLT…LSTA). Low complexity predominate over residues 385–395 (VSTVSSNTSTS). Residues 482-498 (HSHHFPHHHHHHHHHSS) are compositionally biased toward basic residues. The segment covering 629-642 (LHHQTSACPHSNPA) has biased composition (polar residues). Residues 643 to 654 (SQPPPPPPPPPM) are compositionally biased toward pro residues. Positions 880–882 (YPH) are ubiquitin binding. Zn(2+)-binding residues include C915 and C918. The segment at 915-956 (CTICLSILEEGEDVRRLPCMHLFHQVCVDQWLITNKKCPICR) adopts an RING-type; atypical zinc-finger fold. A ubiquitin binding region spans residues 930 to 934 (RLPCM). H938 and C941 together coordinate Zn(2+).

Belongs to the Arkadia family. As to quaternary structure, monomer.

The protein resides in the nucleus. It localises to the cytoplasm. Its subcellular location is the PML body. The enzyme catalyses S-ubiquitinyl-[E2 ubiquitin-conjugating enzyme]-L-cysteine + [acceptor protein]-L-lysine = [E2 ubiquitin-conjugating enzyme]-L-cysteine + N(6)-ubiquitinyl-[acceptor protein]-L-lysine.. It functions in the pathway protein modification; protein ubiquitination. With respect to regulation, binds free ubiquitin non-covalently via its RING-type zinc finger. Ubiquitin-binding leads to enhance the E3 ubiquitin-protein ligase activity by stabilizing the ubiquitin-conjugating enzyme E2 (donor ubiquitin) in the 'closed' conformation and activating ubiquitin transfer. In terms of biological role, E3 ubiquitin-protein ligase required for mesoderm patterning during embryonic development. Acts as an enhancer of the transcriptional responses of the smad2/smad3 effectors, which are activated downstream of BMP. Acts by mediating ubiquitination and degradation of SMAD inhibitors such as smad7, inducing their proteasomal degradation and thereby enhancing the transcriptional activity of TGF-beta and BMP. Specifically binds polysumoylated chains via SUMO interaction motifs (SIMs) and mediates ubiquitination of sumoylated substrates. The regulation of the BMP-SMAD signaling is however independent of sumoylation and is not dependent of SUMO interaction motifs (SIMs). This Xenopus laevis (African clawed frog) protein is E3 ubiquitin-protein ligase arkadia-C (rnf111-c).